Reading from the N-terminus, the 603-residue chain is UvrABC system protein C (603 aa).

Residues 15–92 enclose the GIY-YIG domain; the sequence is DQPGCYLMKD…IKKHDPRFNI (78 aa). Positions 197–232 constitute a UVR domain; it reads KTVKNDLMKKMQVAAENMEFEKAGEFRDQINAIETT.

The protein belongs to the UvrC family. As to quaternary structure, interacts with UvrB in an incision complex.

The protein localises to the cytoplasm. In terms of biological role, the UvrABC repair system catalyzes the recognition and processing of DNA lesions. UvrC both incises the 5' and 3' sides of the lesion. The N-terminal half is responsible for the 3' incision and the C-terminal half is responsible for the 5' incision. The sequence is that of UvrABC system protein C from Listeria welshimeri serovar 6b (strain ATCC 35897 / DSM 20650 / CCUG 15529 / CIP 8149 / NCTC 11857 / SLCC 5334 / V8).